A 188-amino-acid chain; its full sequence is Segregation and condensation protein B (188 aa).

It belongs to the ScpB family. In terms of assembly, homodimer. Homodimerization may be required to stabilize the binding of ScpA to the Smc head domains. Component of a cohesin-like complex composed of ScpA, ScpB and the Smc homodimer, in which ScpA and ScpB bind to the head domain of Smc. The presence of the three proteins is required for the association of the complex with DNA.

Its subcellular location is the cytoplasm. Functionally, participates in chromosomal partition during cell division. May act via the formation of a condensin-like complex containing Smc and ScpA that pull DNA away from mid-cell into both cell halves. The chain is Segregation and condensation protein B from Lactococcus lactis subsp. cremoris (strain MG1363).